A 418-amino-acid chain; its full sequence is UDP-N-acetylglucosamine 1-carboxyvinyltransferase (418 aa).

Position 22-23 (22-23 (KN)) interacts with phosphoenolpyruvate. R92 is a UDP-N-acetyl-alpha-D-glucosamine binding site. C116 functions as the Proton donor in the catalytic mechanism. At C116 the chain carries 2-(S-cysteinyl)pyruvic acid O-phosphothioketal. D306 and I328 together coordinate UDP-N-acetyl-alpha-D-glucosamine.

It belongs to the EPSP synthase family. MurA subfamily.

The protein resides in the cytoplasm. The catalysed reaction is phosphoenolpyruvate + UDP-N-acetyl-alpha-D-glucosamine = UDP-N-acetyl-3-O-(1-carboxyvinyl)-alpha-D-glucosamine + phosphate. Its pathway is cell wall biogenesis; peptidoglycan biosynthesis. In terms of biological role, cell wall formation. Adds enolpyruvyl to UDP-N-acetylglucosamine. The sequence is that of UDP-N-acetylglucosamine 1-carboxyvinyltransferase from Solibacter usitatus (strain Ellin6076).